A 341-amino-acid chain; its full sequence is MTSADHVESAIAERREIVNEAVSEQLPVQKPERLYSASRYLLDAGGKRLRPTILLLAAESLADVEPLSADYRQFPSLPGDEVDVLSAAVSIEVIQSFTLIHDDIMDDDDLRRGVPAVHREYDLETAILAGDTLYSKAFEYMLDTGAPAERSVEALDELATTCTEICEGQALDVDFENRSDVTTEEYLEMVEFKTAVLYAAAASIPAILLGSDDETVEALHGYGLDIGRAFQIQDDLLDLTAPSDELGKQRGSDLVENKRTVITLHARDQGIDVEGLVSDDPSDAEIEAAVQTLEDAGSIDFAREMALDLVTSGKERLDVLPENEARQLLEDIADFLVERSY.

Residues lysine 47, arginine 50, and glutamine 95 each contribute to the isopentenyl diphosphate site. Mg(2+) is bound by residues aspartate 102 and aspartate 106. Residue arginine 111 coordinates an all-trans-polyprenyl diphosphate. Arginine 112 contributes to the isopentenyl diphosphate binding site. An all-trans-polyprenyl diphosphate contacts are provided by lysine 193, threonine 194, and glutamine 231.

This sequence belongs to the FPP/GGPP synthase family. As to quaternary structure, homodimer. Mg(2+) is required as a cofactor.

The protein localises to the cytoplasm. It catalyses the reaction isopentenyl diphosphate + (2E,6E,10E)-geranylgeranyl diphosphate = (2E,6E,10E,14E)-geranylfarnesyl diphosphate + diphosphate. Functionally, probably involved in biosynthesis of the precursor for C25 (sesterterpanyl chain) moiety of C20-C25 diether (2-O-sesterterpanyl-3-O-phytanyl-sn-glycer) membrane lipid. Catalyzes the condensation of isopentenyl pyrophosphate with the allylic pyrophosphates to yield geranylfarnesyl diphosphate (GFPP). Geranylgeranyl diphosphate (GGPP) is the preferred substrate, but dimethylallyl diphosphate (DMAPP) and farnesyl diphosphate (FPP) can also be used as allylic substrate. This Natronomonas pharaonis (strain ATCC 35678 / DSM 2160 / CIP 103997 / JCM 8858 / NBRC 14720 / NCIMB 2260 / Gabara) (Halobacterium pharaonis) protein is Geranylfarnesyl diphosphate synthase (idsA3).